Reading from the N-terminus, the 308-residue chain is MNENNETLTRGFTLMGLFTHNKCSGFFFGVICAVFFMAMIANGVMIFLINIDPHLHTPMYFLLSHLSVIDTLYISTIVPKMLVDYLMGEGTISFIACTAQCFLYMGFMGAEFFLLGLMAYDRYVAICNPLRYPVLISWRVCWMILASSWFGGALDSFLLTPITMSLPFCASHQINHFFCEAPTMLRLACGDKTTYETVMYVCCVAMLLIPFSVVTASYTRILITVHQMTSAEGRKKAFATCSSHMMVVTLFYGAALYTYTLPQSYHTPIKDKVFSAFYTILTPLLNPLIYSLRNRDVMGALKRVVARC.

Topologically, residues 1 to 28 (MNENNETLTRGFTLMGLFTHNKCSGFFF) are extracellular. A glycan (N-linked (GlcNAc...) asparagine) is linked at asparagine 5. A helical transmembrane segment spans residues 29–49 (GVICAVFFMAMIANGVMIFLI). Residues 50–57 (NIDPHLHT) are Cytoplasmic-facing. The chain crosses the membrane as a helical span at residues 58 to 78 (PMYFLLSHLSVIDTLYISTIV). Over 79–98 (PKMLVDYLMGEGTISFIACT) the chain is Extracellular. Residues cysteine 97 and cysteine 179 are joined by a disulfide bond. A helical membrane pass occupies residues 99–119 (AQCFLYMGFMGAEFFLLGLMA). Residues 120–145 (YDRYVAICNPLRYPVLISWRVCWMIL) are Cytoplasmic-facing. A helical transmembrane segment spans residues 146 to 166 (ASSWFGGALDSFLLTPITMSL). Over 167 to 203 (PFCASHQINHFFCEAPTMLRLACGDKTTYETVMYVCC) the chain is Extracellular. Residues 204 to 224 (VAMLLIPFSVVTASYTRILIT) form a helical membrane-spanning segment. The Cytoplasmic portion of the chain corresponds to 225 to 236 (VHQMTSAEGRKK). Residues 237-257 (AFATCSSHMMVVTLFYGAALY) form a helical membrane-spanning segment. Residues 258–271 (TYTLPQSYHTPIKD) lie on the Extracellular side of the membrane. A helical transmembrane segment spans residues 272–292 (KVFSAFYTILTPLLNPLIYSL). At 293–308 (RNRDVMGALKRVVARC) the chain is on the cytoplasmic side.

It belongs to the G-protein coupled receptor 1 family.

It is found in the cell membrane. Functionally, odorant receptor. This is Olfactory receptor 2T6 (OR2T6) from Homo sapiens (Human).